Consider the following 82-residue polypeptide: Putative Fe(2+) transport protein A (82 aa).

This sequence belongs to the FeoA family.

Its function is as follows. Might be involved in Fe(2+) ion uptake. This Methanocaldococcus jannaschii (strain ATCC 43067 / DSM 2661 / JAL-1 / JCM 10045 / NBRC 100440) (Methanococcus jannaschii) protein is Putative Fe(2+) transport protein A.